A 625-amino-acid polypeptide reads, in one-letter code: Beta-galactosidase large subunit (625 aa).

The active-site Proton donor is the glutamate 465. Glutamate 533 functions as the Nucleophile in the catalytic mechanism.

The protein belongs to the glycosyl hydrolase 2 family. In terms of assembly, heterodimer of a large (LacL) and a small subunit (LacM).

The enzyme catalyses Hydrolysis of terminal non-reducing beta-D-galactose residues in beta-D-galactosides.. In terms of biological role, component of a beta-galactosidase. The protein is Beta-galactosidase large subunit of Latilactobacillus sakei (Lactobacillus sakei).